Here is a 184-residue protein sequence, read N- to C-terminus: Large ribosomal subunit protein uL15 (184 aa).

The segment at 1 to 45 is disordered; the sequence is MNLSSLRPAKGSVRNKKRVGRGQGSGNGTTAGKGNKGQQARSGYK. Positions 21–35 are enriched in gly residues; sequence RGQGSGNGTTAGKGN.

Belongs to the universal ribosomal protein uL15 family. Part of the 50S ribosomal subunit.

Its function is as follows. Binds to the 23S rRNA. The sequence is that of Large ribosomal subunit protein uL15 from Chlorobium chlorochromatii (strain CaD3).